The sequence spans 173 residues: Small ribosomal subunit protein uS5 (173 aa).

The S5 DRBM domain occupies 17–80 (LREKMIAVNR…EEARRNMVKV (64 aa)).

Belongs to the universal ribosomal protein uS5 family. In terms of assembly, part of the 30S ribosomal subunit. Contacts proteins S4 and S8.

Functionally, with S4 and S12 plays an important role in translational accuracy. Located at the back of the 30S subunit body where it stabilizes the conformation of the head with respect to the body. In Acidovorax sp. (strain JS42), this protein is Small ribosomal subunit protein uS5.